The primary structure comprises 488 residues: Argininosuccinate lyase 2 (488 aa).

This sequence belongs to the lyase 1 family. Argininosuccinate lyase subfamily.

It localises to the cytoplasm. The enzyme catalyses 2-(N(omega)-L-arginino)succinate = fumarate + L-arginine. It participates in amino-acid biosynthesis; L-arginine biosynthesis; L-arginine from L-ornithine and carbamoyl phosphate: step 3/3. The sequence is that of Argininosuccinate lyase 2 from Rhizobium meliloti (strain 1021) (Ensifer meliloti).